We begin with the raw amino-acid sequence, 400 residues long: CinA-like protein (400 aa).

Belongs to the CinA family.

The chain is CinA-like protein from Shigella flexneri.